The following is a 245-amino-acid chain: 14-3-3 protein zeta/delta (245 aa).

N-acetylmethionine is present on Met-1. Lys-3 carries the post-translational modification N6-acetyllysine. Residue Ser-58 is modified to Phosphoserine; by PKA. Lys-68 is modified (N6-acetyllysine). 3 positions are modified to phosphoserine: Ser-184, Ser-207, and Ser-210. Thr-232 carries the phosphothreonine; by CK1 modification.

The protein belongs to the 14-3-3 family. As to quaternary structure, interacts with CDK16 and BSPRY. Interacts with WEE1 (C-terminal). Interacts with SAMSN1. Interacts with MLF1 (phosphorylated form); the interaction retains it in the cytoplasm. Interacts with Thr-phosphorylated ITGB2. Interacts with BCL2L11. Homodimer. Heterodimerizes with YWHAE. Homo- and heterodimerization is inhibited by phosphorylation on Ser-58. Interacts with FOXO4, NOXA1, SSH1 and ARHGEF2. Interacts with Pseudomonas aeruginosa exoS (unphosphorylated form). Interacts with BAX; the interaction occurs in the cytoplasm. Under stress conditions, MAPK8-mediated phosphorylation releases BAX to mitochondria. Interacts with phosphorylated RAF1; the interaction is inhibited when YWHAZ is phosphorylated on Thr-232. Interacts with TP53; the interaction enhances p53 transcriptional activity. The Ser-58 phosphorylated form inhibits this interaction and p53 transcriptional activity. Interacts with ABL1 (phosphorylated form); the interaction retains ABL1 in the cytoplasm. Interacts with PKA-phosphorylated AANAT; the interaction modulates AANAT enzymatic activity by increasing affinity for arylalkylamines and acetyl-CoA and protecting the enzyme from dephosphorylation and proteasomal degradation. It may also prevent thiol-dependent inactivation. Interacts with AKT1; the interaction phosphorylates YWHAZ and modulates dimerization. Interacts with GAB2 and TLK2. Interacts with the 'Thr-369' phosphorylated form of DAPK2. Interacts with PI4KB, TBC1D22A and TBC1D22B. Interacts with ZFP36L1 (via phosphorylated form); this interaction occurs in a p38 MAPK- and AKT-signaling pathways. Interacts with SLITRK1. Interacts with AK5, LDB1, MADD, MARK3, PDE1A and SMARCB1. Interacts with YWHAZ. Interacts with MEFV. Interacts with ADAM22 (via C-terminus). In terms of processing, the delta, brain-specific form differs from the zeta form in being phosphorylated. Phosphorylation on Ser-184 by MAPK8; promotes dissociation of BAX and translocation of BAX to mitochondria. Phosphorylation on Thr-232; inhibits binding of RAF1. Phosphorylated on Ser-58 by PKA and protein kinase C delta type catalytic subunit in a sphingosine-dependent fashion. Phosphorylation on Ser-58 by PKA; disrupts homodimerization and heterodimerization with YHAE and TP53. Highly expressed in brain (at protein level).

It localises to the cytoplasm. The protein resides in the melanosome. Functionally, adapter protein implicated in the regulation of a large spectrum of both general and specialized signaling pathways. Binds to a large number of partners, usually by recognition of a phosphoserine or phosphothreonine motif. Binding generally results in the modulation of the activity of the binding partner. Promotes cytosolic retention and inactivation of TFEB transcription factor by binding to phosphorylated TFEB. Induces ARHGEF7 activity on RAC1 as well as lamellipodia and membrane ruffle formation. In neurons, regulates spine maturation through the modulation of ARHGEF7 activity. In Ovis aries (Sheep), this protein is 14-3-3 protein zeta/delta (YWHAZ).